Here is an 872-residue protein sequence, read N- to C-terminus: Alanine--tRNA ligase (872 aa).

His566, His570, Cys668, and His672 together coordinate Zn(2+).

Belongs to the class-II aminoacyl-tRNA synthetase family. Requires Zn(2+) as cofactor.

The protein resides in the cytoplasm. The enzyme catalyses tRNA(Ala) + L-alanine + ATP = L-alanyl-tRNA(Ala) + AMP + diphosphate. Its function is as follows. Catalyzes the attachment of alanine to tRNA(Ala) in a two-step reaction: alanine is first activated by ATP to form Ala-AMP and then transferred to the acceptor end of tRNA(Ala). Also edits incorrectly charged Ser-tRNA(Ala) and Gly-tRNA(Ala) via its editing domain. This chain is Alanine--tRNA ligase, found in Lactococcus lactis subsp. cremoris (strain MG1363).